Here is a 56-residue protein sequence, read N- to C-terminus: Large ribosomal subunit protein eL37 (56 aa).

Zn(2+) is bound by residues cysteine 19, cysteine 22, cysteine 34, and cysteine 37. The segment at 19 to 37 adopts a C4-type zinc-finger fold; that stretch reads CRRCGSVSLNVHTKQCTSC.

The protein belongs to the eukaryotic ribosomal protein eL37 family. Zn(2+) is required as a cofactor.

Its function is as follows. Binds to the 23S rRNA. This Methanosarcina mazei (strain ATCC BAA-159 / DSM 3647 / Goe1 / Go1 / JCM 11833 / OCM 88) (Methanosarcina frisia) protein is Large ribosomal subunit protein eL37.